Consider the following 165-residue polypeptide: ATP synthase subunit b (165 aa).

The chain crosses the membrane as a helical span at residues 5-25; sequence LVGITWEFVFQIVNTFIIFLL.

Belongs to the ATPase B chain family. F-type ATPases have 2 components, F(1) - the catalytic core - and F(0) - the membrane proton channel. F(1) has five subunits: alpha(3), beta(3), gamma(1), delta(1), epsilon(1). F(0) has three main subunits: a(1), b(2) and c(10-14). The alpha and beta chains form an alternating ring which encloses part of the gamma chain. F(1) is attached to F(0) by a central stalk formed by the gamma and epsilon chains, while a peripheral stalk is formed by the delta and b chains.

Its subcellular location is the cell membrane. F(1)F(0) ATP synthase produces ATP from ADP in the presence of a proton or sodium gradient. F-type ATPases consist of two structural domains, F(1) containing the extramembraneous catalytic core and F(0) containing the membrane proton channel, linked together by a central stalk and a peripheral stalk. During catalysis, ATP synthesis in the catalytic domain of F(1) is coupled via a rotary mechanism of the central stalk subunits to proton translocation. Functionally, component of the F(0) channel, it forms part of the peripheral stalk, linking F(1) to F(0). This chain is ATP synthase subunit b, found in Clostridioides difficile (strain 630) (Peptoclostridium difficile).